The following is a 244-amino-acid chain: Derlin-2.2 (244 aa).

Residues 1 to 21 are Cytoplasmic-facing; sequence MAQAVEEWYKQMPIITRSYLT. The helical transmembrane segment at 22 to 42 threads the bilayer; the sequence is AAVITTVGCSLDIISPYNLYL. Topologically, residues 43-96 are lumenal; the sequence is NPTLVVKQYQYWRLVTNFLYFRKMDLDFMFHMFFLARYCKLLEENSFRGKTADF. Residues 97-117 traverse the membrane as a helical segment; that stretch reads LYMLLFGASVLTGIVLIGGMI. Residues 118-121 lie on the Cytoplasmic side of the membrane; that stretch reads PYLS. Residues 122–142 traverse the membrane as a helical segment; sequence ASFAKIIFLSNSLTFMMVYVW. Residues 143-152 lie on the Lumenal side of the membrane; that stretch reads SKQNPYIHMS. The helical transmembrane segment at 153–173 threads the bilayer; it reads FLGLFTFTAAYLPWVLLGFSI. Topologically, residues 174–244 are cytoplasmic; sequence LVGASAWVDL…AAPFDEIHQD (71 aa).

Belongs to the derlin family.

It is found in the endoplasmic reticulum membrane. Functionally, may be involved in the degradation process of specific misfolded endoplasmic reticulum (ER) luminal proteins. This chain is Derlin-2.2 (DER2.2), found in Arabidopsis thaliana (Mouse-ear cress).